The sequence spans 127 residues: MAYPYQGRDNRLITGRIHPRARKKRKYELGREPTFTRVGERKIKKIRVRGGNIKIRLKRDMYVNVYDPTQGKTVKAKIVRFLDNPSNRNFARMGILTKGAIVETELGKVKITSRPGQDGVLNGVLIQ.

This sequence belongs to the eukaryotic ribosomal protein eS8 family. Part of the 30S ribosomal subunit.

This Nanoarchaeum equitans (strain Kin4-M) protein is Small ribosomal subunit protein eS8.